A 610-amino-acid chain; its full sequence is Anthocyanin regulatory Lc protein (610 aa).

Disordered regions lie at residues 402–422 (ATGA…MSER) and 468–524 (LESS…PVLT). A bHLH domain is found at 412 to 461 (TGTKNHVMSERKRREKLNEMFLVLKSLLPSIHRVNKASILAETIAYLKEL). The span at 481 to 495 (TTTRLITRPSRGNNE) shows a compositional bias: polar residues. Positions 508-519 (KSPELGRDDVER) are enriched in basic and acidic residues.

It belongs to the bHLH protein family. As to quaternary structure, efficient DNA binding requires dimerization with another bHLH protein.

It is found in the nucleus. Functionally, putative transcriptional activator. Controls tissue-specific synthesis of anthocyanin pigments in various parts of the maize plant. This is Anthocyanin regulatory Lc protein (LC) from Zea mays (Maize).